A 620-amino-acid polypeptide reads, in one-letter code: Glutathione-regulated potassium-efflux system protein KefC (620 aa).

12 helical membrane passes run 4–24 (HTLV…PIAV), 26–46 (LGLG…LWGL), 54–74 (SILH…GLEL), 90–110 (GALQ…LLGL), 114–134 (VAEL…MQAM), 149–169 (FAVL…IPLL), 178–198 (MGAF…VVLL), 218–238 (VFSA…EEVG), 270–290 (GLLL…GTLI), 294–314 (LRIV…LWLI), 327–347 (WFAV…GAAQ), and 359–379 (SLTL…VILN). Positions 399–518 (QPRVIIAGFG…AGVEKPERET (120 aa)) constitute an RCK N-terminal domain. The interval 597–620 (GWQGTEEGKHTGNMADEPETKPSS) is disordered.

The protein belongs to the monovalent cation:proton antiporter 2 (CPA2) transporter (TC 2.A.37) family. KefC subfamily. Homodimer. Interacts with the regulatory subunit KefF.

It is found in the cell inner membrane. Its function is as follows. Pore-forming subunit of a potassium efflux system that confers protection against electrophiles. Catalyzes K(+)/H(+) antiport. In Shigella flexneri serotype 5b (strain 8401), this protein is Glutathione-regulated potassium-efflux system protein KefC.